Here is a 282-residue protein sequence, read N- to C-terminus: Undecaprenyl-diphosphatase (282 aa).

Transmembrane regions (helical) follow at residues 40–60, 85–105, 115–135, 153–173, 193–213, 230–250, and 258–278; these read GAAFTAIIQIGTLAAVLMYFW, ARMGWMIAAGTIPIVVFGLLF, SLYWISGALIGLALLLSLAEW, IGWKEALLIGLAQSIALIPGS, AARFSFLLSLPAVFAAGIFQL, LAAATFTSAVVGYLSIAFLLS, and TIFIIYRLLAGILLLLLLSTG.

It belongs to the UppP family.

The protein resides in the cell inner membrane. It catalyses the reaction di-trans,octa-cis-undecaprenyl diphosphate + H2O = di-trans,octa-cis-undecaprenyl phosphate + phosphate + H(+). Functionally, catalyzes the dephosphorylation of undecaprenyl diphosphate (UPP). Confers resistance to bacitracin. The chain is Undecaprenyl-diphosphatase from Chlorobium phaeovibrioides (strain DSM 265 / 1930) (Prosthecochloris vibrioformis (strain DSM 265)).